A 475-amino-acid polypeptide reads, in one-letter code: Bifunctional protein HldE (475 aa).

Positions Met1–Thr318 are ribokinase. Asn195–Glu198 is an ATP binding site. The active site involves Asp264. Positions Met344–Gly475 are cytidylyltransferase.

It in the N-terminal section; belongs to the carbohydrate kinase PfkB family. The protein in the C-terminal section; belongs to the cytidylyltransferase family. In terms of assembly, homodimer.

It carries out the reaction D-glycero-beta-D-manno-heptose 7-phosphate + ATP = D-glycero-beta-D-manno-heptose 1,7-bisphosphate + ADP + H(+). The enzyme catalyses D-glycero-beta-D-manno-heptose 1-phosphate + ATP + H(+) = ADP-D-glycero-beta-D-manno-heptose + diphosphate. It functions in the pathway nucleotide-sugar biosynthesis; ADP-L-glycero-beta-D-manno-heptose biosynthesis; ADP-L-glycero-beta-D-manno-heptose from D-glycero-beta-D-manno-heptose 7-phosphate: step 1/4. It participates in nucleotide-sugar biosynthesis; ADP-L-glycero-beta-D-manno-heptose biosynthesis; ADP-L-glycero-beta-D-manno-heptose from D-glycero-beta-D-manno-heptose 7-phosphate: step 3/4. Its function is as follows. Catalyzes the phosphorylation of D-glycero-D-manno-heptose 7-phosphate at the C-1 position to selectively form D-glycero-beta-D-manno-heptose-1,7-bisphosphate. In terms of biological role, catalyzes the ADP transfer from ATP to D-glycero-beta-D-manno-heptose 1-phosphate, yielding ADP-D-glycero-beta-D-manno-heptose. This is Bifunctional protein HldE from Aeromonas salmonicida (strain A449).